Reading from the N-terminus, the 180-residue chain is Nudix hydrolase 16, mitochondrial (180 aa).

The Nudix hydrolase domain occupies 18–162; that stretch reads GSRLVAGCIP…WMKDALVEGF (145 aa). Phe60 is a binding site for substrate. Mn(2+) is bound by residues Gly63, Glu78, Glu82, and Glu144. Residues 63 to 84 carry the Nudix box motif; the sequence is GGWENDETVREAAAREAVEEAG.

It belongs to the Nudix hydrolase family. Mg(2+) is required as a cofactor. Mn(2+) serves as cofactor. Expressed in roots, leaves, stems and inflorescences.

The protein resides in the mitochondrion. Its function is as follows. Probably mediates the hydrolysis of some nucleoside diphosphate derivatives. The chain is Nudix hydrolase 16, mitochondrial (NUDT16) from Arabidopsis thaliana (Mouse-ear cress).